The chain runs to 318 residues: Ribosome biogenesis protein RLP7 (318 aa).

Disordered stretches follow at residues 1-49 (MSQP…NRFV) and 101-121 (AGSK…DEED). A compositionally biased stretch (basic and acidic residues) spans 19–40 (ADRTRLEKQELAKKRKEQEEKQ). The span at 110 to 121 (ELQDVDEEDEED) shows a compositional bias: acidic residues.

It belongs to the universal ribosomal protein uL30 family.

The protein resides in the nucleus. It is found in the nucleolus. Involved in the biogenesis of the 60S ribosomal subunit. May act as a specificity factor that binds precursor rRNAs and tethers the enzymes that carry out the early 5' to 3' exonucleolytic reactions that generate the mature rRNAs. This Kluyveromyces lactis (strain ATCC 8585 / CBS 2359 / DSM 70799 / NBRC 1267 / NRRL Y-1140 / WM37) (Yeast) protein is Ribosome biogenesis protein RLP7 (RLP7).